We begin with the raw amino-acid sequence, 303 residues long: Probable cell division protein WhiA (303 aa).

The H-T-H motif DNA-binding region spans 272–303; that stretch reads SIQQVADALEFPITKSGVNHRLRKINKIADDL.

It belongs to the WhiA family.

Functionally, involved in cell division and chromosome segregation. This chain is Probable cell division protein WhiA, found in Streptococcus pyogenes serotype M3 (strain ATCC BAA-595 / MGAS315).